Consider the following 115-residue polypeptide: MGLLICSLLLGLLCCSMAKDTPPKVEVYTREPEEFGKPNSFICHVSGFYPPQINITLLKDGKEIPNTQQTDLAFEANWYYYLTKHVSFTPKEDDEFICRVTHMGKSKDHFLMIGL.

The first 18 residues, 1–18, serve as a signal peptide directing secretion; the sequence is MGLLICSLLLGLLCCSMA. The 92-residue stretch at 23 to 114 folds into the Ig-like C1-type domain; that stretch reads PKVEVYTREP…KSKDHFLMIG (92 aa).

It belongs to the beta-2-microglobulin family. As to quaternary structure, heterodimer of an alpha chain and a beta chain. Beta-2-microglobulin is the beta-chain of major histocompatibility complex class I molecules.

It is found in the secreted. Component of the class I major histocompatibility complex (MHC). Involved in the presentation of peptide antigens to the immune system. The polypeptide is Beta-2-microglobulin (b2m) (Paralichthys olivaceus (Bastard halibut)).